Consider the following 1193-residue polypeptide: Pyruvate carboxylase (1193 aa).

The 453-residue stretch at 41-493 folds into the Biotin carboxylation domain; the sequence is QFQKILVANR…WTTFIDDTTE (453 aa). Residues K159, E243, and H278 each coordinate ATP. Residues 163-360 form the ATP-grasp domain; that stretch reads RQLAIRCNVP…IVAAQIQIAA (198 aa). The active site involves R335. A Pyruvate carboxyltransferase domain is found at 579–847; the sequence is CLIMDTTWRD…DPGLNSAHVR (269 aa). Substrate contacts are provided by residues 587 to 591 and R660; that span reads RDAHQ. D588 lines the a divalent metal cation pocket. The a divalent metal cation site is built by K756, H786, and H788. K756 carries the N6-carboxylysine modification. T921 serves as a coordination point for substrate. The 76-residue stretch at 1116–1191 folds into the Biotinyl-binding domain; that stretch reads KADVGDSSQV…DGQDLVCKIT (76 aa). K1157 bears the N6-biotinyllysine mark.

Biotin is required as a cofactor. It depends on Zn(2+) as a cofactor.

Its subcellular location is the cytoplasm. It carries out the reaction hydrogencarbonate + pyruvate + ATP = oxaloacetate + ADP + phosphate + H(+). It functions in the pathway carbohydrate biosynthesis; gluconeogenesis. Pyruvate carboxylase catalyzes a 2-step reaction, involving the ATP-dependent carboxylation of the covalently attached biotin in the first step and the transfer of the carboxyl group to pyruvate in the second. This Aspergillus terreus (strain NIH 2624 / FGSC A1156) protein is Pyruvate carboxylase (pyc).